The following is a 381-amino-acid chain: Metacaspase-8 (381 aa).

Residues His86 and Cys140 contribute to the active site. Cys140 bears the S-nitrosocysteine mark.

It belongs to the peptidase C14B family. In terms of processing, proteolytically processed; by an autocatalytic mechanism.

Cysteine protease that cleaves specifically after arginine residues. Does not cleave caspase-specific substrates. May be involved in the modulation of programmed cell death activated by oxidative stress. This is Metacaspase-8 (AMC8) from Arabidopsis thaliana (Mouse-ear cress).